Reading from the N-terminus, the 290-residue chain is 33 kDa chaperonin (290 aa).

2 cysteine pairs are disulfide-bonded: Cys-235–Cys-237 and Cys-268–Cys-271.

It belongs to the HSP33 family. Under oxidizing conditions two disulfide bonds are formed involving the reactive cysteines. Under reducing conditions zinc is bound to the reactive cysteines and the protein is inactive.

It localises to the cytoplasm. In terms of biological role, redox regulated molecular chaperone. Protects both thermally unfolding and oxidatively damaged proteins from irreversible aggregation. Plays an important role in the bacterial defense system toward oxidative stress. In Streptococcus equi subsp. zooepidemicus (strain MGCS10565), this protein is 33 kDa chaperonin.